The sequence spans 395 residues: Methylthioribose-1-phosphate isomerase (395 aa).

The Proton donor role is filled by D258.

The protein belongs to the eIF-2B alpha/beta/delta subunits family. MtnA subfamily.

It localises to the cytoplasm. The protein localises to the nucleus. It catalyses the reaction 5-(methylsulfanyl)-alpha-D-ribose 1-phosphate = 5-(methylsulfanyl)-D-ribulose 1-phosphate. It participates in amino-acid biosynthesis; L-methionine biosynthesis via salvage pathway; L-methionine from S-methyl-5-thio-alpha-D-ribose 1-phosphate: step 1/6. Its function is as follows. Catalyzes the interconversion of methylthioribose-1-phosphate (MTR-1-P) into methylthioribulose-1-phosphate (MTRu-1-P). This Podospora anserina (strain S / ATCC MYA-4624 / DSM 980 / FGSC 10383) (Pleurage anserina) protein is Methylthioribose-1-phosphate isomerase.